Reading from the N-terminus, the 166-residue chain is NAD(P)H-quinone oxidoreductase subunit I, chloroplastic (166 aa).

4Fe-4S ferredoxin-type domains are found at residues 55 to 84 and 95 to 124; these read GRIHFEFDKCIACEVCVRVCPIDLPVVDWK and LNYSIDFGICIFCGNCVEYCPTNCLSMTEE. 8 residues coordinate [4Fe-4S] cluster: cysteine 64, cysteine 67, cysteine 70, cysteine 74, cysteine 104, cysteine 107, cysteine 110, and cysteine 114.

This sequence belongs to the complex I 23 kDa subunit family. As to quaternary structure, NDH is composed of at least 16 different subunits, 5 of which are encoded in the nucleus. The cofactor is [4Fe-4S] cluster.

It is found in the plastid. It localises to the chloroplast thylakoid membrane. The catalysed reaction is a plastoquinone + NADH + (n+1) H(+)(in) = a plastoquinol + NAD(+) + n H(+)(out). It carries out the reaction a plastoquinone + NADPH + (n+1) H(+)(in) = a plastoquinol + NADP(+) + n H(+)(out). Its function is as follows. NDH shuttles electrons from NAD(P)H:plastoquinone, via FMN and iron-sulfur (Fe-S) centers, to quinones in the photosynthetic chain and possibly in a chloroplast respiratory chain. The immediate electron acceptor for the enzyme in this species is believed to be plastoquinone. Couples the redox reaction to proton translocation, and thus conserves the redox energy in a proton gradient. The protein is NAD(P)H-quinone oxidoreductase subunit I, chloroplastic of Polymnia canadensis (White-flowered leaf-cup).